The primary structure comprises 247 residues: Carboxy-S-adenosyl-L-methionine synthase (247 aa).

S-adenosyl-L-methionine-binding positions include Y39, 64 to 66 (GCS), 89 to 90 (DN), 117 to 118 (DI), N132, and R199.

The protein belongs to the class I-like SAM-binding methyltransferase superfamily. Cx-SAM synthase family. In terms of assembly, homodimer.

It catalyses the reaction prephenate + S-adenosyl-L-methionine = carboxy-S-adenosyl-L-methionine + 3-phenylpyruvate + H2O. Functionally, catalyzes the conversion of S-adenosyl-L-methionine (SAM) to carboxy-S-adenosyl-L-methionine (Cx-SAM). The polypeptide is Carboxy-S-adenosyl-L-methionine synthase (Escherichia coli O17:K52:H18 (strain UMN026 / ExPEC)).